Here is a 201-residue protein sequence, read N- to C-terminus: Imidazoleglycerol-phosphate dehydratase (201 aa).

The protein belongs to the imidazoleglycerol-phosphate dehydratase family.

It localises to the cytoplasm. The catalysed reaction is D-erythro-1-(imidazol-4-yl)glycerol 3-phosphate = 3-(imidazol-4-yl)-2-oxopropyl phosphate + H2O. The protein operates within amino-acid biosynthesis; L-histidine biosynthesis; L-histidine from 5-phospho-alpha-D-ribose 1-diphosphate: step 6/9. This is Imidazoleglycerol-phosphate dehydratase from Prochlorococcus marinus (strain MIT 9301).